Reading from the N-terminus, the 177-residue chain is Transcriptional repressor NrdR (177 aa).

A zinc finger spans residues cysteine 3–cysteine 34. Positions proline 49–aspartate 139 constitute an ATP-cone domain.

Belongs to the NrdR family. Zn(2+) is required as a cofactor.

Its function is as follows. Negatively regulates transcription of bacterial ribonucleotide reductase nrd genes and operons by binding to NrdR-boxes. This chain is Transcriptional repressor NrdR, found in Xylella fastidiosa (strain M23).